Consider the following 362-residue polypeptide: Putative protein ARB2BP (362 aa).

A helical transmembrane segment spans residues 229-245 (IAFIVHGYGGLVFMDLL).

This sequence belongs to the ARB2 family.

Its subcellular location is the membrane. This Homo sapiens (Human) protein is Putative protein ARB2BP.